The following is a 520-amino-acid chain: 2-isopropylmalate synthase (520 aa).

The region spanning V5 to Y268 is the Pyruvate carboxyltransferase domain. Residues D14, H202, H204, and N238 each coordinate Mn(2+). Positions K394–V520 are regulatory domain.

It belongs to the alpha-IPM synthase/homocitrate synthase family. LeuA type 1 subfamily. Homodimer. The cofactor is Mn(2+).

The protein localises to the cytoplasm. It catalyses the reaction 3-methyl-2-oxobutanoate + acetyl-CoA + H2O = (2S)-2-isopropylmalate + CoA + H(+). Its pathway is amino-acid biosynthesis; L-leucine biosynthesis; L-leucine from 3-methyl-2-oxobutanoate: step 1/4. Functionally, catalyzes the condensation of the acetyl group of acetyl-CoA with 3-methyl-2-oxobutanoate (2-ketoisovalerate) to form 3-carboxy-3-hydroxy-4-methylpentanoate (2-isopropylmalate). The protein is 2-isopropylmalate synthase of Aquifex aeolicus (strain VF5).